Reading from the N-terminus, the 537-residue chain is Carbamoyl phosphate synthase large chain, C-terminal section (537 aa).

Residues 1 to 395 are carbamoyl phosphate synthetic domain; the sequence is MSKKVVILGS…AYYKAQLSAG (395 aa). The ATP-grasp domain occupies 122–313; sequence RELIIELGLK…LAKIATKVAI (192 aa). ATP is bound by residues R158, K197, L199, E204, G229, V230, H231, S232, Q272, and E284. Positions 272, 284, and 286 each coordinate Mg(2+). Residues Q272, E284, and N286 each contribute to the Mn(2+) site. The region spanning 396-537 is the MGS-like domain; the sequence is YRLPEKGNLF…VHSLQEIYNI (142 aa). Residues 396–537 form an allosteric domain region; sequence YRLPEKGNLF…VHSLQEIYNI (142 aa).

This sequence belongs to the CarB family. As to quaternary structure, composed of two chains; the small (or glutamine) chain promotes the hydrolysis of glutamine to ammonia, which is used by the large (or ammonia) chain to synthesize carbamoyl phosphate. Tetramer of heterodimers (alpha,beta)4. The cofactor is Mg(2+). It depends on Mn(2+) as a cofactor.

It catalyses the reaction hydrogencarbonate + L-glutamine + 2 ATP + H2O = carbamoyl phosphate + L-glutamate + 2 ADP + phosphate + 2 H(+). The catalysed reaction is hydrogencarbonate + NH4(+) + 2 ATP = carbamoyl phosphate + 2 ADP + phosphate + 2 H(+). It participates in amino-acid biosynthesis; L-arginine biosynthesis; carbamoyl phosphate from bicarbonate: step 1/1. Its pathway is pyrimidine metabolism; UMP biosynthesis via de novo pathway; (S)-dihydroorotate from bicarbonate: step 1/3. Its function is as follows. Large subunit of the glutamine-dependent carbamoyl phosphate synthetase (CPSase). CPSase catalyzes the formation of carbamoyl phosphate from the ammonia moiety of glutamine, carbonate, and phosphate donated by ATP, constituting the first step of 2 biosynthetic pathways, one leading to arginine and/or urea and the other to pyrimidine nucleotides. The large subunit (synthetase) binds the substrates ammonia (free or transferred from glutamine from the small subunit), hydrogencarbonate and ATP and carries out an ATP-coupled ligase reaction, activating hydrogencarbonate by forming carboxy phosphate which reacts with ammonia to form carbamoyl phosphate. The polypeptide is Carbamoyl phosphate synthase large chain, C-terminal section (carB2) (Aquifex aeolicus (strain VF5)).